Consider the following 172-residue polypeptide: Acetolactate synthase small subunit (172 aa).

The 76-residue stretch at 4–79 folds into the ACT domain; sequence IITLTVVNRS…DVLKVTDITN (76 aa).

This sequence belongs to the acetolactate synthase small subunit family. As to quaternary structure, dimer of large and small chains.

The catalysed reaction is 2 pyruvate + H(+) = (2S)-2-acetolactate + CO2. It participates in amino-acid biosynthesis; L-isoleucine biosynthesis; L-isoleucine from 2-oxobutanoate: step 1/4. The protein operates within amino-acid biosynthesis; L-valine biosynthesis; L-valine from pyruvate: step 1/4. This chain is Acetolactate synthase small subunit (ilvH), found in Bacillus subtilis (strain 168).